We begin with the raw amino-acid sequence, 148 residues long: Putative fusion protein (148 aa).

Residues 1–34 are disordered; sequence MDRALSTFPGDDDETNERNINHREKTSGEHGHYE. Positions 16 to 34 are enriched in basic and acidic residues; that stretch reads NERNINHREKTSGEHGHYE.

The protein belongs to the poxviruses fusion protein family. Homotrimer, covalently linked.

It localises to the virion membrane. This is Putative fusion protein from Sheeppox virus (strain KS-1) (SPPV).